The following is a 456-amino-acid chain: Protein disulfide-isomerase TMX3 (456 aa).

Residues 1-29 form the signal peptide; that stretch reads MANAVGRRSWAALRLCAAVILLDLAVCKG. One can recognise a Thioredoxin domain in the interval 30-131; that stretch reads FVEDLNESFK…KDDIIEFAHR (102 aa). Topologically, residues 30 to 378 are lumenal; that stretch reads FVEDLNESFK…TIVSIFKSSP (349 aa). Residue Asn-35 is glycosylated (N-linked (GlcNAc...) asparagine). Catalysis depends on nucleophile residues Cys-56 and Cys-59. A disulfide bridge connects residues Cys-56 and Cys-59. N-linked (GlcNAc...) asparagine glycosylation is found at Asn-261 and Asn-316. Residues 379-399 traverse the membrane as a helical segment; it reads LMGCFLFGLPLGVISIMCYGI. At 400–456 the chain is on the cytoplasmic side; the sequence is YTADTDGGYIEERYEVSKSEMENQEQIEESKEQESSSGGSLAPTVQEPKDVLEKKKD. The interval 416–456 is disordered; the sequence is SKSEMENQEQIEESKEQESSSGGSLAPTVQEPKDVLEKKKD. Over residues 446 to 456 the composition is skewed to basic and acidic residues; that stretch reads EPKDVLEKKKD. Residues 453–456 carry the Di-lysine motif motif; that stretch reads KKKD.

The protein belongs to the protein disulfide isomerase family.

It is found in the endoplasmic reticulum membrane. The catalysed reaction is Catalyzes the rearrangement of -S-S- bonds in proteins.. Probable disulfide isomerase, which participates in the folding of proteins containing disulfide bonds. May act as a dithiol oxidase. Acts as a regulator of endoplasmic reticulum-mitochondria contact sites via its ability to regulate redox signals. This is Protein disulfide-isomerase TMX3 (Tmx3) from Mus musculus (Mouse).